A 174-amino-acid polypeptide reads, in one-letter code: NADH-quinone oxidoreductase subunit B 1 (174 aa).

Cysteine 53, cysteine 54, cysteine 118, and cysteine 148 together coordinate [4Fe-4S] cluster.

The protein belongs to the complex I 20 kDa subunit family. As to quaternary structure, NDH-1 is composed of 14 different subunits. Subunits NuoB, C, D, E, F, and G constitute the peripheral sector of the complex. It depends on [4Fe-4S] cluster as a cofactor.

It localises to the cell inner membrane. It catalyses the reaction a quinone + NADH + 5 H(+)(in) = a quinol + NAD(+) + 4 H(+)(out). Functionally, NDH-1 shuttles electrons from NADH, via FMN and iron-sulfur (Fe-S) centers, to quinones in the respiratory chain. The immediate electron acceptor for the enzyme in this species is believed to be ubiquinone. Couples the redox reaction to proton translocation (for every two electrons transferred, four hydrogen ions are translocated across the cytoplasmic membrane), and thus conserves the redox energy in a proton gradient. This is NADH-quinone oxidoreductase subunit B 1 from Cereibacter sphaeroides (strain KD131 / KCTC 12085) (Rhodobacter sphaeroides).